Here is a 6874-residue protein sequence, read N- to C-terminus: Nesprin-2 (6874 aa).

An actin-binding region spans residues 1–286 (MAASPVLPTE…MTYVAQFLKY (286 aa)). Topologically, residues 1-6823 (MAASPVLPTE…RRSFLSRVIR (6823 aa)) are cytoplasmic. Calponin-homology (CH) domains are found at residues 31–136 (DTQK…LHFH) and 183–288 (WSAK…KYSK). 4 Spectrin repeats span residues 299 to 380 (AKVR…HQVA), 381 to 474 (AWRA…RINN), 475 to 577 (VLGK…QYIH), and 578 to 680 (NTKA…IQDQ). The stretch at 299–6767 (AKVRDALVWL…PDASLTSFDE (6469 aa)) forms a coiled coil. Residues 675 to 723 (VKIQDQPPGNSSGTSLSKESAMAAEPGGSRGEDVKAAEKQEVEDEESAG) are disordered. The span at 681–692 (PPGNSSGTSLSK) shows a compositional bias: polar residues. Positions 704-714 (RGEDVKAAEKQ) are enriched in basic and acidic residues. Spectrin repeat units follow at residues 727-834 (VNEE…KNLS), 835-928 (DEPL…LRHE), 929-1030 (ISLY…KCAS), 1120-1211 (TQRG…LLNT), 1262-1322 (DIRD…DALD), 1323-1409 (ALEG…QSKE), 1410-1514 (EGPP…ASVT), 1515-1626 (ESLE…KTEE), 1627-1728 (YGEN…AGGS), 1729-1820 (NSYA…TKKN), 1821-1928 (ALQD…AGEL), 1929-2026 (NNSF…EEED), 2027-2122 (KLPA…LANT), 2123-2233 (YLSH…SVQK), 2234-2350 (LEGH…LNSI), 2422-2503 (DERE…TLKK), 2504-2610 (TKER…KCFQ), 2611-2707 (QATE…EALE), 2708-2821 (PLNR…QLEL), 2822-2923 (KLEE…FLQN), 2924-3027 (NGSE…GKIK), 3028-3133 (QLDT…NMLL), 3134-3239 (ELQP…SLRA), 3240-3343 (DVLN…AQEA), 3344-3456 (EEER…QWGG), 3457-3563 (ELKR…TTRK), 3564-3669 (NKDL…SSEV), 3670-3767 (SKSS…ESRT), 3768-3870 (SQLN…QIME), 3871-3976 (ALPH…VTQE), and 3977-4074 (QNEL…KPSA). Residues 2338 to 2397 (SAKQETENGLNSILKSKSSTEKHVKFSLPVEEMPATSEVPKPTRESAAVGESGGARETNT) form a disordered region. Positions 2344-2354 (ENGLNSILKSK) are enriched in polar residues. Disordered regions lie at residues 4062-4152 (KQEQ…ATIV), 4171-4193 (APDS…TDEG), 4326-4348 (FSED…DQPA), and 4401-4429 (HQEN…DSTL). Positions 4081 to 4091 (VAERDASERKL) are enriched in basic and acidic residues. Position 4096 is a phosphoserine (S4096). Over residues 4110–4122 (SSVKSEDGRRRTE) the composition is skewed to basic and acidic residues. The Spectrin 36 repeat unit spans residues 4218 to 4337 (RSRPRPADIL…EDQHPSTLKK (120 aa)). The segment covering 4326–4345 (FSEDQHPSTLKKPSEPHDVD) has biased composition (basic and acidic residues). Residues 4409 to 4429 (RQSASSSKVPSPGNAASDSTL) are compositionally biased toward polar residues. Spectrin repeat units follow at residues 4507-4626 (SMTE…RSYQ), 4627-4714 (NEVK…RARY), 4715-4823 (LELS…QSML), 4824-4929 (QKWE…QTLL), 4930-5037 (KHLL…QEKL), 5038-5150 (HQLQ…KIQH), 5151-5252 (LEQL…SQVH), 5253-5377 (QLRA…KAPH), 5378-5473 (NAHA…MLLA), 5474-5576 (KSNE…YSEL), 5577-5691 (QGNG…QWRF), 5692-5786 (FTTS…LSLG), 5787-5894 (EVIS…RVAI), 5895-6004 (RKQE…VKKL), 6005-6122 (KETF…EETW), 6123-6230 (RLWQ…LRYF), and 6231-6342 (TNQR…PGLD). Residues 5435-5459 (NSTLSDQLPQPEERSTPGLHSGQRH) are disordered. S5772 is subject to Phosphoserine. Residues 6336-6473 (SHTPGLDDEK…TEAPVPTDAS (138 aa)) are disordered. Acidic residues predominate over residues 6341-6354 (LDDEKEASENETDI). Phosphoserine is present on residues S6348, S6371, S6400, S6417, S6418, S6419, and S6448. A compositionally biased stretch (basic and acidic residues) spans 6355 to 6372 (EDPREIQADSWRKRRESE). Spectrin repeat units follow at residues 6450 to 6534 (SHSK…KLRL), 6535 to 6650 (KQTV…QCQD), and 6651 to 6767 (FHQL…SFDE). The segment at 6790–6812 (EEEEEEEETDSRMPHLDSPGSSQ) is disordered. Residues 6815–6874 (RSFLSRVIRAALPLQLLLLLLLLLACLLPASEDDYSCTQANNFARSFYPMLRYTNGPPPT) enclose the KASH domain. A helical; Anchor for type IV membrane protein membrane pass occupies residues 6824–6844 (AALPLQLLLLLLLLLACLLPA). Over 6845 to 6874 (SEDDYSCTQANNFARSFYPMLRYTNGPPPT) the chain is Perinuclear space. The interval 6861-6874 (FYPMLRYTNGPPPT) is sufficient for interaction with SUN2.

The protein belongs to the nesprin family. In terms of assembly, core component of LINC complexes which are composed of inner nuclear membrane SUN domain-containing proteins coupled to outer nuclear membrane KASH domain-containing nesprins. SUN and KASH domain-containing proteins seem to bind each other promiscuously; however, some LINC complex constituents are tissue- or cell type-specific. At least SUN1/2-containing core LINC complexes are proposed to be hexameric composed of three protomers of each KASH and SUN domain-containing protein. The SUN2:SYNE2/KASH2 complex is a heterohexamer; the homotrimeric cloverleave-like conformation of the SUN domain is a prerequisite for LINC complex formation in which three separate SYNE2/KASH2 peptides bind at the interface of adjacent SUN domains. Interacts with EMD, LMNA, MKS3 and F-actin via its N-terminal domain. Interacts with DCTN1 and DYNC1I1/2; suggesting the association with the dynein-dynactin motor complex. Associates with kinesin motor complexes. Interacts with TMEM67. Interacts (via KASH domain) with TMEM258. Interacts with BROX; this interaction promotes SYN2 ubiquitination and facilitates the relaxation of mechanical stress imposed by compressive actin fibers at the rupture site. In terms of processing, the disulfid bond with SUN2 is required for stability of the SUN2:SYNE2/KASH2 LINC complex under tensile forces though not required for the interaction. As to expression, C-terminal isoforms are highly expressed in the brain, hert and skeletal muscle. Isoform 1 (Nesprin-2 Giant) is most prevalent in the brain, skin, kidney and skeletal muscle.

It localises to the nucleus outer membrane. Its subcellular location is the sarcoplasmic reticulum membrane. The protein localises to the cell membrane. It is found in the cytoplasm. The protein resides in the cytoskeleton. It localises to the mitochondrion. Its subcellular location is the nucleus. The protein localises to the nucleoplasm. Its function is as follows. Multi-isomeric modular protein which forms a linking network between organelles and the actin cytoskeleton to maintain the subcellular spatial organization. As a component of the LINC (LInker of Nucleoskeleton and Cytoskeleton) complex involved in the connection between the nuclear lamina and the cytoskeleton. The nucleocytoplasmic interactions established by the LINC complex play an important role in the transmission of mechanical forces across the nuclear envelope and in nuclear movement and positioning. Specifically, SYNE2 and SUN2 assemble in arrays of transmembrane actin-associated nuclear (TAN) lines which are bound to F-actin cables and couple the nucleus to retrograde actin flow during actin-dependent nuclear movement. May be involved in nucleus-centrosome attachment. During interkinetic nuclear migration (INM) at G2 phase and nuclear migration in neural progenitors its LINC complex association with SUN1/2 and probable association with cytoplasmic dynein-dynactin motor complexes functions to pull the nucleus toward the centrosome; SYNE1 and SYNE2 seem to act redundantly in cerebellum, midbrain, brain stem, and other brain regions except cerebral cortex and hippocampus. During INM at G1 phase mediates respective LINC complex association with kinesin to push the nucleus away from the centrosome. Involved in nuclear migration in retinal photoreceptor progenitors. Required for centrosome migration to the apical cell surface during early ciliogenesis. This Mus musculus (Mouse) protein is Nesprin-2.